The sequence spans 332 residues: Adenine deaminase (332 aa).

Zn(2+) is bound by residues His14, His16, and His194. The active-site Proton donor is Glu197. Asp275 is a Zn(2+) binding site. A substrate-binding site is contributed by Asp276.

The protein belongs to the metallo-dependent hydrolases superfamily. Adenosine and AMP deaminases family. Adenine deaminase type 2 subfamily. It depends on Zn(2+) as a cofactor.

It carries out the reaction adenine + H2O + H(+) = hypoxanthine + NH4(+). Functionally, catalyzes the hydrolytic deamination of adenine to hypoxanthine. Plays an important role in the purine salvage pathway and in nitrogen catabolism. The polypeptide is Adenine deaminase (Psychrobacter cryohalolentis (strain ATCC BAA-1226 / DSM 17306 / VKM B-2378 / K5)).